Here is a 159-residue protein sequence, read N- to C-terminus: Ribosomal RNA large subunit methyltransferase H (159 aa).

Residues leucine 76, glycine 108, and 127–132 each bind S-adenosyl-L-methionine; that span reads FSKMTF.

This sequence belongs to the RNA methyltransferase RlmH family. In terms of assembly, homodimer.

The protein localises to the cytoplasm. The enzyme catalyses pseudouridine(1915) in 23S rRNA + S-adenosyl-L-methionine = N(3)-methylpseudouridine(1915) in 23S rRNA + S-adenosyl-L-homocysteine + H(+). Its function is as follows. Specifically methylates the pseudouridine at position 1915 (m3Psi1915) in 23S rRNA. The chain is Ribosomal RNA large subunit methyltransferase H from Clostridium botulinum (strain Eklund 17B / Type B).